Here is a 676-residue protein sequence, read N- to C-terminus: Lon-like protease BrxL (676 aa).

Belongs to the BrxL family.

Functionally, BREX systems (bacteriophage exclusion) provide immunity against bacteriophage. Part of a type 1 BREX system. This system allows phage adsorption but prevents phage DNA replication, without degradation of the phage DNA. Methylation of bacterial DNA by PglX probably guides self/non-self discrimination. When the brxA-brxB-brxC-pglX and pglZ-brxL operons are transformed into a susceptible B.subtilis strain (BEST7003) they confer resistance to bacteriophages SPbeta, SP16, Zeta, phi3T and SP02 and partial protection to phages SP01 and SP82G (these include lytic and temperate phage). They do not protect against phages phi105, rho10 or rho14. Additionally confers a very slight reduction in efficiency of plasmid transformation. In Bacillus cereus (strain H3081.97), this protein is Lon-like protease BrxL.